A 226-amino-acid chain; its full sequence is Large ribosomal subunit protein uL1 (226 aa).

This sequence belongs to the universal ribosomal protein uL1 family. Part of the 50S ribosomal subunit.

Functionally, binds directly to 23S rRNA. The L1 stalk is quite mobile in the ribosome, and is involved in E site tRNA release. Protein L1 is also a translational repressor protein, it controls the translation of the L11 operon by binding to its mRNA. The polypeptide is Large ribosomal subunit protein uL1 (Treponema pallidum (strain Nichols)).